Here is a 394-residue protein sequence, read N- to C-terminus: RILP-like protein 1 (394 aa).

Residues 2-89 (EGISALEKNV…RLERMDRIEK (88 aa)) form the RH1 domain. The stretch at 68–312 (EMEELRLELD…KVFMLQEELA (245 aa)) forms a coiled coil. Residues 282 to 347 (RPRFTLQELR…IPQESGIKRL (66 aa)) form the RH2 domain. Residues 318-337 (EADEEHKLPQSSPVIDSKAP) form a disordered region.

The protein belongs to the RILPL family.

The protein resides in the cytoplasm. Its subcellular location is the cytosol. The protein localises to the cytoskeleton. It is found in the microtubule organizing center. It localises to the centrosome. The protein resides in the cell projection. Its subcellular location is the cilium. Its function is as follows. Plays a role in the regulation of cell shape and polarity. Plays a role in cellular protein transport, including protein transport away from primary cilia. Neuroprotective protein. The sequence is that of RILP-like protein 1 (rilpl1) from Xenopus tropicalis (Western clawed frog).